The sequence spans 178 residues: tRNA (cytidine(56)-2'-O)-methyltransferase (178 aa).

Residues leucine 84, 112–116, and 130–137 contribute to the S-adenosyl-L-methionine site; these read GAEKV and VGNQPHSE.

The protein belongs to the aTrm56 family. In terms of assembly, homodimer.

The protein localises to the cytoplasm. It catalyses the reaction cytidine(56) in tRNA + S-adenosyl-L-methionine = 2'-O-methylcytidine(56) in tRNA + S-adenosyl-L-homocysteine + H(+). In terms of biological role, specifically catalyzes the AdoMet-dependent 2'-O-ribose methylation of cytidine at position 56 in tRNAs. The chain is tRNA (cytidine(56)-2'-O)-methyltransferase from Methanocella arvoryzae (strain DSM 22066 / NBRC 105507 / MRE50).